Here is a 689-residue protein sequence, read N- to C-terminus: Choline transporter-like 1 (689 aa).

A helical transmembrane segment spans residues 23 to 43; the sequence is IFWLVVYILFWIALLVIAVFS. N-linked (GlcNAc...) asparagine glycosylation is present at asparagine 134. 2 consecutive transmembrane segments (helical) span residues 199–219 and 233–255; these read FSDIYKTWPTVLLLVGLSLIF and IISWLICIFVAVASIGITAVLWW. Asparagine 279 is a glycosylation site (N-linked (GlcNAc...) asparagine). Transmembrane regions (helical) follow at residues 283–303 and 333–353; these read IYVLAILATCIMIILLVVIYY and VLAFIALAVFLSFWMVVIVCL. N-linked (GlcNAc...) asparagine glycosylation is found at asparagine 375 and asparagine 389. 4 helical membrane passes run 412-432, 461-481, 562-582, and 591-611; these read IYIIGLVWTSEFIFACQQLVI, LGSVAKGSFIITLFKIPRLIL, LVLFLGKLAVAALCGLISILM, and FYMAPVIIITLFSFFVAHIVL.

The protein belongs to the CTL (choline transporter-like) family.

The protein resides in the membrane. This chain is Choline transporter-like 1, found in Aedes aegypti (Yellowfever mosquito).